The chain runs to 223 residues: UPF0441 protein YgiB (223 aa).

Over residues 178–195 (TVPKTAMAPKPATTTTVT) the composition is skewed to low complexity. The segment at 178-223 (TVPKTAMAPKPATTTTVTRGGFGESVAKQSTMQRSAAGTSTRSMGG) is disordered. Residues 204–223 (AKQSTMQRSAAGTSTRSMGG) are compositionally biased toward polar residues.

The protein belongs to the UPF0441 family.

The sequence is that of UPF0441 protein YgiB from Salmonella paratyphi A (strain ATCC 9150 / SARB42).